A 753-amino-acid polypeptide reads, in one-letter code: MAP/microtubule affinity-regulating kinase 3 (753 aa).

Residues Met1–Gly36 are disordered. Residues Asn11 to Val28 are compositionally biased toward basic and acidic residues. The residue at position 42 (Ser42) is a Phosphoserine. The 252-residue stretch at Tyr56–Ile307 folds into the Protein kinase domain. ATP contacts are provided by residues Ile62–Val70 and Lys85. Residue Asp178 is the Proton acceptor of the active site. Thr211 carries the post-translational modification Phosphothreonine; by LKB1. The region spanning Ile326–Gly365 is the UBA domain. A phosphoserine mark is found at Ser368, Ser374, Ser376, Ser380, Ser383, Leu384, Ser400, Arg407, Ser419, and Ser469. Positions Glu370 to Gly600 are disordered. Over residues Ser374–Ala385 the composition is skewed to low complexity. Residues Ser391–Ser400 are compositionally biased toward polar residues. 2 stretches are compositionally biased toward polar residues: residues Ser490–Arg513 and Val521–Ala548. Phosphoserine occurs at positions 540 and 543. Phosphothreonine is present on Thr549. Thr564 is subject to Phosphothreonine; by PKC/PRKCZ. Residues Ser583, Ser598, Ser601, and Ser643 each carry the phosphoserine modification. Polar residues predominate over residues Pro584–Gly600. The interval Asn632–Pro655 is disordered. Residues Glu645 to Pro655 are compositionally biased toward basic and acidic residues. Positions Asp704–Leu753 constitute a KA1 domain.

The protein belongs to the protein kinase superfamily. CAMK Ser/Thr protein kinase family. SNF1 subfamily. As to quaternary structure, interacts with MAPT/TAU. Interacts with DLG5 (via coiled-coil domain). Interacts with STK3/MST2 and STK4/MST1 in the presence of DLG5. Interacts with YWHAB, YWHAG, YWHAQ and YWHAZ. Interacts with PKP2 (via N-terminus). Interacts with CDC25C. Interacts with KSR1. Post-translationally, phosphorylated at Thr-211 by STK11/LKB1 in complex with STE20-related adapter-alpha (STRADA) pseudo kinase and CAB39. Phosphorylation at Thr-564 by PRKCZ/aPKC inhibits the kinase activity. In terms of tissue distribution, ubiquitous.

The protein resides in the cell membrane. It localises to the cell projection. The protein localises to the dendrite. Its subcellular location is the cytoplasm. It catalyses the reaction L-seryl-[protein] + ATP = O-phospho-L-seryl-[protein] + ADP + H(+). The enzyme catalyses L-threonyl-[protein] + ATP = O-phospho-L-threonyl-[protein] + ADP + H(+). With respect to regulation, activated by phosphorylation on Thr-211. Inhibited by phosphorylation on Thr-564. Serine/threonine-protein kinase. Involved in the specific phosphorylation of microtubule-associated proteins for MAP2 and MAP4. Phosphorylates the microtubule-associated protein MAPT/TAU. Phosphorylates CDC25C on 'Ser-216'. Regulates localization and activity of some histone deacetylases by mediating phosphorylation of HDAC7, promoting subsequent interaction between HDAC7 and 14-3-3 and export from the nucleus. Regulates localization and activity of MITF by mediating its phosphorylation, promoting subsequent interaction between MITF and 14-3-3 and retention in the cytosol. Negatively regulates the Hippo signaling pathway and antagonizes the phosphorylation of LATS1. Cooperates with DLG5 to inhibit the kinase activity of STK3/MST2 toward LATS1. Phosphorylates PKP2 and KSR1. This chain is MAP/microtubule affinity-regulating kinase 3 (MARK3), found in Homo sapiens (Human).